A 480-amino-acid polypeptide reads, in one-letter code: Aspartyl/glutamyl-tRNA(Asn/Gln) amidotransferase subunit B (480 aa).

It belongs to the GatB/GatE family. GatB subfamily. Heterotrimer of A, B and C subunits.

The catalysed reaction is L-glutamyl-tRNA(Gln) + L-glutamine + ATP + H2O = L-glutaminyl-tRNA(Gln) + L-glutamate + ADP + phosphate + H(+). It carries out the reaction L-aspartyl-tRNA(Asn) + L-glutamine + ATP + H2O = L-asparaginyl-tRNA(Asn) + L-glutamate + ADP + phosphate + 2 H(+). Allows the formation of correctly charged Asn-tRNA(Asn) or Gln-tRNA(Gln) through the transamidation of misacylated Asp-tRNA(Asn) or Glu-tRNA(Gln) in organisms which lack either or both of asparaginyl-tRNA or glutaminyl-tRNA synthetases. The reaction takes place in the presence of glutamine and ATP through an activated phospho-Asp-tRNA(Asn) or phospho-Glu-tRNA(Gln). The chain is Aspartyl/glutamyl-tRNA(Asn/Gln) amidotransferase subunit B from Hahella chejuensis (strain KCTC 2396).